The sequence spans 370 residues: Protein TEEBE (370 aa).

The first 21 residues, 1 to 21 (MSLYHSLSIFLLLSLCHGSYS), serve as a signal peptide directing secretion. Asparagine 215 is a glycosylation site (N-linked (GlcNAc...) asparagine).

As to expression, expressed in primary and lateral roots, stigmatic papillae and hypocotyls.

It is found in the secreted. The protein localises to the cell wall. In terms of biological role, prevents hypocotyl epidermal cells elongation by modulating the pectin status in cell walls. Likely regulates pectin methylesterification degree during cell separation and elongation, including upon root-knot nematode Meloidogyne incognita infection. This chain is Protein TEEBE, found in Arabidopsis thaliana (Mouse-ear cress).